The primary structure comprises 444 residues: ATP-dependent RNA helicase SrmB (444 aa).

A Q motif motif is present at residues 4–32; the sequence is TTFSELELDESLLEALQDKGFTRPTAIQA. Residues 35–209 enclose the Helicase ATP-binding domain; that stretch reads IPPALDGRDV…AERLLEDPVE (175 aa). An ATP-binding site is contributed by 48 to 55; sequence APTGTGKT. Positions 157–160 match the DEAD box motif; sequence DEAD. Positions 238 to 387 constitute a Helicase C-terminal domain; it reads LLVHLLKQPE…ELRPKTRAPS (150 aa). Basic and acidic residues predominate over residues 382–391; it reads KTRAPSEKQT. Positions 382-444 are disordered; the sequence is KTRAPSEKQT…TGVPPQTTEE (63 aa). Composition is skewed to basic residues over residues 394–406 and 414–432; these read PSKKVLAKRAEKK and PRVKKRHRDTKNIGKRRKP.

This sequence belongs to the DEAD box helicase family. SrmB subfamily. In terms of assembly, interacts with the 50S ribosomal subunit. Forms a complex with the 50S ribosomal proteins L4 and L24, and a region near the 5'-end of 23S rRNA.

The protein resides in the cytoplasm. It catalyses the reaction ATP + H2O = ADP + phosphate + H(+). DEAD-box RNA helicase involved in the assembly of the 50S ribosomal subunit at low temperature. Exhibits RNA-stimulated ATP hydrolysis and RNA unwinding activity. Acts before DeaD. This is ATP-dependent RNA helicase SrmB from Escherichia coli (strain K12).